A 565-amino-acid polypeptide reads, in one-letter code: CTP synthase (565 aa).

Positions 1-268 are amidoligase domain; that stretch reads MQTKYIFVTG…GELVVDRFYP (268 aa). Residue serine 14 participates in CTP binding. Serine 14 is a UTP binding site. An ATP-binding site is contributed by 15–20; that stretch reads SLGKGI. An L-glutamine-binding site is contributed by tyrosine 55. ATP is bound at residue aspartate 72. Positions 72 and 142 each coordinate Mg(2+). CTP is bound by residues 149–151, 189–194, and lysine 225; these read DIE and KTKPTQ. UTP contacts are provided by residues 189-194 and lysine 225; that span reads KTKPTQ. The Glutamine amidotransferase type-1 domain maps to 301-543; sequence PIALVGKYVE…VRACTAYAHE (243 aa). Glycine 363 contributes to the L-glutamine binding site. The active-site Nucleophile; for glutamine hydrolysis is cysteine 390. L-glutamine contacts are provided by residues 391–394, glutamate 414, and arginine 471; that span reads LGLQ. Residues histidine 516 and glutamate 518 contribute to the active site. The tract at residues 545-565 is disordered; the sequence is DLVTSPQPPERKAVPLASVDM.

It belongs to the CTP synthase family. Homotetramer.

The catalysed reaction is UTP + L-glutamine + ATP + H2O = CTP + L-glutamate + ADP + phosphate + 2 H(+). It carries out the reaction L-glutamine + H2O = L-glutamate + NH4(+). The enzyme catalyses UTP + NH4(+) + ATP = CTP + ADP + phosphate + 2 H(+). Its pathway is pyrimidine metabolism; CTP biosynthesis via de novo pathway; CTP from UDP: step 2/2. With respect to regulation, allosterically activated by GTP, when glutamine is the substrate; GTP has no effect on the reaction when ammonia is the substrate. The allosteric effector GTP functions by stabilizing the protein conformation that binds the tetrahedral intermediate(s) formed during glutamine hydrolysis. Inhibited by the product CTP, via allosteric rather than competitive inhibition. Catalyzes the ATP-dependent amination of UTP to CTP with either L-glutamine or ammonia as the source of nitrogen. Regulates intracellular CTP levels through interactions with the four ribonucleotide triphosphates. The chain is CTP synthase from Salinibacter ruber (strain DSM 13855 / M31).